Here is a 969-residue protein sequence, read N- to C-terminus: Protein translocase subunit SecA (969 aa).

ATP contacts are provided by residues glutamine 99, 117–121, and aspartate 631; that span reads GEGKT.

Belongs to the SecA family. In terms of assembly, monomer and homodimer. Part of the essential Sec protein translocation apparatus which comprises SecA, SecYEG and auxiliary proteins SecDF. Other proteins may also be involved.

Its subcellular location is the cell inner membrane. It is found in the cytoplasm. The catalysed reaction is ATP + H2O + cellular proteinSide 1 = ADP + phosphate + cellular proteinSide 2.. Part of the Sec protein translocase complex. Interacts with the SecYEG preprotein conducting channel. Has a central role in coupling the hydrolysis of ATP to the transfer of proteins into and across the cell membrane, serving as an ATP-driven molecular motor driving the stepwise translocation of polypeptide chains across the membrane. In Chlamydia trachomatis serovar D (strain ATCC VR-885 / DSM 19411 / UW-3/Cx), this protein is Protein translocase subunit SecA.